Here is a 566-residue protein sequence, read N- to C-terminus: Chromatin assembly factor 1 subunit B (566 aa).

WD repeat units follow at residues 11 to 54, 64 to 103, 127 to 166, 169 to 208, 228 to 279, and 351 to 392; these read HNKE…DGKA, RHTK…ELEP, GHLE…KVSI, EHKS…VAFN, FHDD…RPMG, and IHYH…IPLK. 2 disordered regions span residues 411–481 and 501–566; these read KSQP…NQPR and IPLK…KPNK. 2 stretches are compositionally biased toward polar residues: residues 425 to 437 and 469 to 478; these read TEGT…TLQP and QPASQSTKVN.

This sequence belongs to the WD repeat HIR1 family. Interacts with CHAF1A.

The protein resides in the nucleus. Its function is as follows. Acts as a component of the histone chaperone complex chromatin assembly factor 1 (CAF-1), which assembles histone octamers onto DNA during replication and repair. CAF-1 performs the first step of the nucleosome assembly process, bringing newly synthesized histones H3 and H4 to replicating DNA; histones H2A/H2B can bind to this chromatin precursor subsequent to DNA replication to complete the histone octamer. The chain is Chromatin assembly factor 1 subunit B (CHAF1B) from Gallus gallus (Chicken).